The sequence spans 359 residues: Peptide chain release factor 1 (359 aa).

Gln-236 is modified (N5-methylglutamine).

The protein belongs to the prokaryotic/mitochondrial release factor family. Methylated by PrmC. Methylation increases the termination efficiency of RF1.

Its subcellular location is the cytoplasm. In terms of biological role, peptide chain release factor 1 directs the termination of translation in response to the peptide chain termination codons UAG and UAA. In Streptococcus agalactiae serotype Ia (strain ATCC 27591 / A909 / CDC SS700), this protein is Peptide chain release factor 1.